Reading from the N-terminus, the 418-residue chain is Hepatic and glial cell adhesion molecule (418 aa).

Positions 1–33 (MKRERGALSRASRALRLSPFVYLLLIQPVPLEG) are cleaved as a signal peptide. The region spanning 34–142 (VNITSPVRLI…GEKTINLTVD (109 aa)) is the Ig-like V-type domain. The Extracellular segment spans residues 34–240 (VNITSPVRLI…VKITVYRRSS (207 aa)). N-linked (GlcNAc...) asparagine glycans are attached at residues Asn-35, Asn-138, Asn-167, and Asn-189. One can recognise an Ig-like C2-type domain in the interval 148–234 (PQVLVASTTV…QVRSLPVKIT (87 aa)). Cys-168 and Cys-217 form a disulfide bridge. Residues 241-261 (LYIILSTGGIFLLVTLVTVCA) traverse the membrane as a helical segment. Over 262–418 (CWKPSKKSRK…DESGQVEISA (157 aa)) the chain is Cytoplasmic. Positions 271 to 418 (KKRKLEKQNS…DESGQVEISA (148 aa)) are disordered. Residue Ser-280 is modified to Phosphoserine. Residues 287-308 (NDDRLKSEADTLPRSGEQERKN) are compositionally biased toward basic and acidic residues. Phosphoserine is present on residues Ser-321, Ser-352, and Ser-379. Residues 341–358 (GYSVSPPVPGRSPGLPIR) show a composition bias toward low complexity. The span at 385-396 (SSPGRSRSSSRS) shows a compositional bias: low complexity.

In terms of assembly, homodimer. Dimer formation occurs predominantly through cis interactions on the cell surface. Part of a complex containing MLC1, TRPV4, AQP4 and ATP1B1. Interacts with CLCN2. N-glycosylated.

The protein resides in the cytoplasm. Its subcellular location is the cell membrane. Its function is as follows. Involved in regulating cell motility and cell-matrix interactions. May inhibit cell growth through suppression of cell proliferation. In glia, associates and targets CLCN2 at astrocytic processes and myelinated fiber tracts where it may regulate transcellular chloride flux involved in neuron excitability. In Mus musculus (Mouse), this protein is Hepatic and glial cell adhesion molecule.